The sequence spans 318 residues: tRNA-cytidine(32) 2-sulfurtransferase (318 aa).

The short motif at 52 to 57 (SGGKDS) is the PP-loop motif element. [4Fe-4S] cluster is bound by residues Cys-127, Cys-130, and Cys-218.

This sequence belongs to the TtcA family. In terms of assembly, homodimer. Mg(2+) serves as cofactor. [4Fe-4S] cluster is required as a cofactor.

Its subcellular location is the cytoplasm. It carries out the reaction cytidine(32) in tRNA + S-sulfanyl-L-cysteinyl-[cysteine desulfurase] + AH2 + ATP = 2-thiocytidine(32) in tRNA + L-cysteinyl-[cysteine desulfurase] + A + AMP + diphosphate + H(+). The protein operates within tRNA modification. In terms of biological role, catalyzes the ATP-dependent 2-thiolation of cytidine in position 32 of tRNA, to form 2-thiocytidine (s(2)C32). The sulfur atoms are provided by the cysteine/cysteine desulfurase (IscS) system. In Actinobacillus pleuropneumoniae serotype 5b (strain L20), this protein is tRNA-cytidine(32) 2-sulfurtransferase.